We begin with the raw amino-acid sequence, 162 residues long: Phosphopantetheine adenylyltransferase (162 aa).

Ser11 provides a ligand contact to substrate. ATP-binding positions include 11 to 12 and His19; that span reads SF. 3 residues coordinate substrate: Lys43, Val76, and Arg90. ATP-binding positions include 91–93, Glu101, and 126–132; these read GLR and HLYISSS.

Belongs to the bacterial CoaD family. In terms of assembly, homohexamer. Mg(2+) serves as cofactor.

It is found in the cytoplasm. The catalysed reaction is (R)-4'-phosphopantetheine + ATP + H(+) = 3'-dephospho-CoA + diphosphate. The protein operates within cofactor biosynthesis; coenzyme A biosynthesis; CoA from (R)-pantothenate: step 4/5. In terms of biological role, reversibly transfers an adenylyl group from ATP to 4'-phosphopantetheine, yielding dephospho-CoA (dPCoA) and pyrophosphate. This is Phosphopantetheine adenylyltransferase from Streptococcus pneumoniae (strain Hungary19A-6).